The primary structure comprises 207 residues: Serotype 2 fimbrial subunit (207 aa).

The N-terminal stretch at 1 to 26 (MQIPFQRALRLCLRAALAAIASAAHA) is a signal peptide. A disulfide bridge links C42 with C85.

This sequence belongs to the fimbrial protein family.

It is found in the fimbrium. Bordetella pertussis is the causative agent of whooping cough. An essential step in the disease process is the attachment of the bacteria to the ciliated epithelium of the respiratory tract, enabling the organism to resist normal host-clearance mechanisms. It is unclear which bacterial cell surface component are responsible for adherence but the fimbriae of B.pertussis are prime candidates for being involved in this process. The polypeptide is Serotype 2 fimbrial subunit (fim2) (Bordetella pertussis (strain Tohama I / ATCC BAA-589 / NCTC 13251)).